A 160-amino-acid chain; its full sequence is Nucleotide-binding protein VS_1405 (160 aa).

Belongs to the YajQ family.

Functionally, nucleotide-binding protein. The polypeptide is Nucleotide-binding protein VS_1405 (Vibrio atlanticus (strain LGP32) (Vibrio splendidus (strain Mel32))).